Here is a 126-residue protein sequence, read N- to C-terminus: Histone H2B type 2-E (126 aa).

Residues 1-12 (MPEPAKSAPAPK) are compositionally biased toward low complexity. A disordered region spans residues 1–35 (MPEPAKSAPAPKKGSKKAVTKAQKKDGKKRKRSRK). Position 2 is an N-acetylproline (proline 2). Glutamate 3 carries the ADP-ribosyl glutamic acid modification. Lysine 6 carries the N6-(2-hydroxyisobutyryl)lysine; alternate modification. Lysine 6 bears the N6-(beta-hydroxybutyryl)lysine; alternate mark. Residue lysine 6 is modified to N6-acetyllysine; alternate. Lysine 6 carries the post-translational modification N6-butyryllysine; alternate. Lysine 6 carries the post-translational modification N6-crotonyllysine; alternate. Position 6 is an N6-lactoyllysine; alternate (lysine 6). Residue lysine 6 forms a Glycyl lysine isopeptide (Lys-Gly) (interchain with G-Cter in SUMO2); alternate linkage. The residue at position 7 (serine 7) is an ADP-ribosylserine. Lysine 12 is modified (N6-(beta-hydroxybutyryl)lysine; alternate). Residues lysine 12 and lysine 13 each carry the N6-acetyllysine; alternate modification. An N6-crotonyllysine; alternate mark is found at lysine 12 and lysine 13. Lysine 12 is subject to N6-lactoyllysine; alternate. N6-(2-hydroxyisobutyryl)lysine; alternate is present on lysine 13. Phosphoserine; by STK4/MST1 is present on serine 15. Lysine 16, lysine 17, lysine 21, and lysine 24 each carry N6-acetyllysine; alternate. An N6-crotonyllysine; alternate mark is found at lysine 16, lysine 17, lysine 21, and lysine 24. Lysine 16, lysine 17, lysine 21, and lysine 24 each carry N6-lactoyllysine; alternate. N6-(beta-hydroxybutyryl)lysine; alternate occurs at positions 17 and 21. N6-glutaryllysine; alternate is present on lysine 17. An N6-(2-hydroxyisobutyryl)lysine; alternate mark is found at lysine 21 and lysine 24. N6-butyryllysine; alternate is present on lysine 21. A Glycyl lysine isopeptide (Lys-Gly) (interchain with G-Cter in SUMO2); alternate cross-link involves residue lysine 21. Lysine 25 is subject to N6-(2-hydroxyisobutyryl)lysine. An N6-(2-hydroxyisobutyryl)lysine; alternate modification is found at lysine 35. Position 35 is an N6-(beta-hydroxybutyryl)lysine; alternate (lysine 35). Lysine 35 is subject to N6-crotonyllysine; alternate. Lysine 35 is modified (N6-glutaryllysine; alternate). Lysine 35 carries the post-translational modification N6-succinyllysine; alternate. A Glycyl lysine isopeptide (Lys-Gly) (interchain with G-Cter in ubiquitin); alternate cross-link involves residue lysine 35. A PolyADP-ribosyl glutamic acid modification is found at glutamate 36. At serine 37 the chain carries Phosphoserine; by AMPK. Lysine 44, lysine 47, and lysine 58 each carry N6-(2-hydroxyisobutyryl)lysine; alternate. The residue at position 44 (lysine 44) is an N6-lactoyllysine; alternate. N6-glutaryllysine; alternate is present on residues lysine 44 and lysine 47. Lysine 47 bears the N6-methyllysine; alternate mark. The residue at position 58 (lysine 58) is an N6,N6-dimethyllysine; alternate. A Dimethylated arginine modification is found at arginine 80. Lysine 86 is modified (N6-(2-hydroxyisobutyryl)lysine; alternate). Lysine 86 carries the post-translational modification N6-(beta-hydroxybutyryl)lysine; alternate. At lysine 86 the chain carries N6-acetyllysine; alternate. An N6-lactoyllysine; alternate modification is found at lysine 86. Position 86 is an N6,N6,N6-trimethyllysine; alternate (lysine 86). An omega-N-methylarginine mark is found at arginine 87 and arginine 93. Lysine 109 is subject to N6-(2-hydroxyisobutyryl)lysine; alternate. Lysine 109 carries the N6-lactoyllysine; alternate modification. Lysine 109 carries the post-translational modification N6-glutaryllysine; alternate. Residue lysine 109 is modified to N6-methyllysine; alternate. O-linked (GlcNAc) serine glycosylation is present at serine 113. Phosphothreonine is present on threonine 116. N6-(2-hydroxyisobutyryl)lysine; alternate is present on residues lysine 117 and lysine 121. Lysine 117 and lysine 121 each carry N6-(beta-hydroxybutyryl)lysine; alternate. N6-lactoyllysine; alternate occurs at positions 117 and 121. An N6-glutaryllysine; alternate mark is found at lysine 117 and lysine 121. An N6-succinyllysine; alternate mark is found at lysine 117 and lysine 121. Position 117 is an N6-malonyllysine; alternate (lysine 117). An N6-methylated lysine; alternate modification is found at lysine 117. Residue lysine 121 forms a Glycyl lysine isopeptide (Lys-Gly) (interchain with G-Cter in ubiquitin); alternate linkage.

Belongs to the histone H2B family. The nucleosome is a histone octamer containing two molecules each of H2A, H2B, H3 and H4 assembled in one H3-H4 heterotetramer and two H2A-H2B heterodimers. The octamer wraps approximately 147 bp of DNA. Post-translationally, monoubiquitination at Lys-35 (H2BK34Ub) by the MSL1/MSL2 dimer is required for histone H3 'Lys-4' (H3K4me) and 'Lys-79' (H3K79me) methylation and transcription activation at specific gene loci, such as HOXA9 and MEIS1 loci. Similarly, monoubiquitination at Lys-121 (H2BK120Ub) by the RNF20/40 complex gives a specific tag for epigenetic transcriptional activation and is also prerequisite for histone H3 'Lys-4' and 'Lys-79' methylation. It also functions cooperatively with the FACT dimer to stimulate elongation by RNA polymerase II. H2BK120Ub also acts as a regulator of mRNA splicing: deubiquitination by USP49 is required for efficient cotranscriptional splicing of a large set of exons. Phosphorylation at Ser-37 (H2BS36ph) by AMPK in response to stress promotes transcription. Phosphorylated on Ser-15 (H2BS14ph) by STK4/MST1 during apoptosis; which facilitates apoptotic chromatin condensation. Also phosphorylated on Ser-15 in response to DNA double strand breaks (DSBs), and in correlation with somatic hypermutation and immunoglobulin class-switch recombination. In terms of processing, glcNAcylation at Ser-113 promotes monoubiquitination of Lys-121. It fluctuates in response to extracellular glucose, and associates with transcribed genes. Post-translationally, ADP-ribosylated by PARP1 or PARP2 on Ser-7 (H2BS6ADPr) in response to DNA damage. H2BS6ADPr promotes recruitment of CHD1L. Mono-ADP-ribosylated on Glu-3 (H2BE2ADPr) by PARP3 in response to single-strand breaks. Poly ADP-ribosylation on Glu-36 (H2BE35ADPr) by PARP1 regulates adipogenesis: it inhibits phosphorylation at Ser-37 (H2BS36ph), thereby blocking expression of pro-adipogenetic genes. Crotonylation (Kcr) is specifically present in male germ cells and marks testis-specific genes in post-meiotic cells, including X-linked genes that escape sex chromosome inactivation in haploid cells. Crotonylation marks active promoters and enhancers and confers resistance to transcriptional repressors. It is also associated with post-meiotically activated genes on autosomes. In terms of processing, lactylated in macrophages by EP300/P300 by using lactoyl-CoA directly derived from endogenous or exogenous lactate, leading to stimulates gene transcription.

It localises to the nucleus. The protein localises to the chromosome. In terms of biological role, core component of nucleosome. Nucleosomes wrap and compact DNA into chromatin, limiting DNA accessibility to the cellular machineries which require DNA as a template. Histones thereby play a central role in transcription regulation, DNA repair, DNA replication and chromosomal stability. DNA accessibility is regulated via a complex set of post-translational modifications of histones, also called histone code, and nucleosome remodeling. Functionally, has broad antibacterial activity. May contribute to the formation of the functional antimicrobial barrier of the colonic epithelium, and to the bactericidal activity of amniotic fluid. In Homo sapiens (Human), this protein is Histone H2B type 2-E.